The following is a 436-amino-acid chain: UDP-N-acetylmuramoylalanine--D-glutamate ligase (436 aa).

112–118 is an ATP binding site; the sequence is GSNGKST.

The protein belongs to the MurCDEF family.

It localises to the cytoplasm. The enzyme catalyses UDP-N-acetyl-alpha-D-muramoyl-L-alanine + D-glutamate + ATP = UDP-N-acetyl-alpha-D-muramoyl-L-alanyl-D-glutamate + ADP + phosphate + H(+). The protein operates within cell wall biogenesis; peptidoglycan biosynthesis. Functionally, cell wall formation. Catalyzes the addition of glutamate to the nucleotide precursor UDP-N-acetylmuramoyl-L-alanine (UMA). This Photorhabdus laumondii subsp. laumondii (strain DSM 15139 / CIP 105565 / TT01) (Photorhabdus luminescens subsp. laumondii) protein is UDP-N-acetylmuramoylalanine--D-glutamate ligase.